A 159-amino-acid chain; its full sequence is Eukaryotic translation initiation factor 5A-5 (159 aa).

The span at 1-12 shows a compositional bias: basic and acidic residues; the sequence is MSDEEHHFESKA. The disordered stretch occupies residues 1–23; it reads MSDEEHHFESKADAGASKTYPQQ. Lys52 carries the post-translational modification Hypusine.

This sequence belongs to the eIF-5A family. In terms of processing, lys-52 undergoes hypusination, a unique post-translational modification that consists in the addition of a butylamino group from spermidine to lysine side chain, leading to the formation of the unusual amino acid hypusine. eIF-5As are the only known proteins to undergo this modification, which is essential for their function.

Functionally, translation factor that promotes translation elongation and termination, particularly upon ribosome stalling at specific amino acid sequence contexts. Binds between the exit (E) and peptidyl (P) site of the ribosome and promotes rescue of stalled ribosome: specifically required for efficient translation of polyproline-containing peptides as well as other motifs that stall the ribosome. Acts as a ribosome quality control (RQC) cofactor by joining the RQC complex to facilitate peptidyl transfer during CAT tailing step. This is Eukaryotic translation initiation factor 5A-5 (EIF5A5) from Solanum tuberosum (Potato).